Reading from the N-terminus, the 482-residue chain is tRNA sulfurtransferase (482 aa).

The THUMP domain maps to 61-165; the sequence is QQVLEILTTT…DDKLNQILAH (105 aa). ATP contacts are provided by residues 183–184, K265, G287, and Q296; that span reads LI. C344 and C456 are oxidised to a cystine. In terms of domain architecture, Rhodanese spans 404–482; sequence IEEHAVVLDI…GFNNVKVYRP (79 aa). The Cysteine persulfide intermediate role is filled by C456.

This sequence belongs to the ThiI family.

The protein resides in the cytoplasm. The enzyme catalyses [ThiI sulfur-carrier protein]-S-sulfanyl-L-cysteine + a uridine in tRNA + 2 reduced [2Fe-2S]-[ferredoxin] + ATP + H(+) = [ThiI sulfur-carrier protein]-L-cysteine + a 4-thiouridine in tRNA + 2 oxidized [2Fe-2S]-[ferredoxin] + AMP + diphosphate. It catalyses the reaction [ThiS sulfur-carrier protein]-C-terminal Gly-Gly-AMP + S-sulfanyl-L-cysteinyl-[cysteine desulfurase] + AH2 = [ThiS sulfur-carrier protein]-C-terminal-Gly-aminoethanethioate + L-cysteinyl-[cysteine desulfurase] + A + AMP + 2 H(+). It functions in the pathway cofactor biosynthesis; thiamine diphosphate biosynthesis. Functionally, catalyzes the ATP-dependent transfer of a sulfur to tRNA to produce 4-thiouridine in position 8 of tRNAs, which functions as a near-UV photosensor. Also catalyzes the transfer of sulfur to the sulfur carrier protein ThiS, forming ThiS-thiocarboxylate. This is a step in the synthesis of thiazole, in the thiamine biosynthesis pathway. The sulfur is donated as persulfide by IscS. This Vibrio vulnificus (strain CMCP6) protein is tRNA sulfurtransferase.